Here is a 64-residue protein sequence, read N- to C-terminus: DNA gyrase inhibitor YacG (64 aa).

Residues cysteine 10, cysteine 13, cysteine 29, and cysteine 33 each coordinate Zn(2+).

It belongs to the DNA gyrase inhibitor YacG family. In terms of assembly, interacts with GyrB. Zn(2+) is required as a cofactor.

Functionally, inhibits all the catalytic activities of DNA gyrase by preventing its interaction with DNA. Acts by binding directly to the C-terminal domain of GyrB, which probably disrupts DNA binding by the gyrase. This chain is DNA gyrase inhibitor YacG, found in Pectobacterium carotovorum subsp. carotovorum (strain PC1).